A 42-amino-acid chain; its full sequence is DQDCLPGWSSHEGHCYKVFNLDKTWEDAEKFCTEQPSNGHLV.

The C-type lectin domain maps to 1 to 42 (DQDCLPGWSSHEGHCYKVFNLDKTWEDAEKFCTEQPSNGHLV). Residues C4 and C15 are joined by a disulfide bond.

As to quaternary structure, heterodimer of subunits alpha and beta; disulfide-linked. Ca(2+) serves as cofactor. Glycosylated. As to expression, expressed by the venom gland.

It localises to the secreted. Functionally, binds to the platelet GPIb/IX/V receptor system and inhibits ristocetin-induced platelet aggregation in human platelet-rich plasma. Strongly inhibits platelet aggregation induced by ADP, calcium ionophore, thrombin and collagen. Does not inhibit U46619-induced platelet aggregation. This chain is Snaclec lebecetin subunit alpha, found in Macrovipera lebetinus (Levantine viper).